A 540-amino-acid polypeptide reads, in one-letter code: Aquaporin-5 (540 aa).

The interval M1–S224 is disordered. Over M1–H263 the chain is Cytoplasmic. Polar residues predominate over residues P25–K44. 4 stretches are compositionally biased toward basic and acidic residues: residues R119–N133, R140–R155, Y174–R194, and S204–D214. A helical membrane pass occupies residues F264 to G284. The Extracellular portion of the chain corresponds to T285–A308. N-linked (GlcNAc...) asparagine glycosylation occurs at N296. Residues V309–F329 form a helical membrane-spanning segment. Residues R330–S332 are Cytoplasmic-facing. The chain crosses the membrane as a helical span at residues G333 to P353. Topologically, residues R354–A356 are extracellular. Residues C357–F377 form a helical membrane-spanning segment. Residues P378–T393 are Cytoplasmic-facing. Residues V394–L414 traverse the membrane as a helical segment. The Extracellular segment spans residues A415–K420. The chain crosses the membrane as a helical span at residues A421–V441. Over Y442–H467 the chain is Cytoplasmic. Residues W468–I488 form a helical membrane-spanning segment. Topologically, residues K489 to S540 are extracellular. The tract at residues G499–S540 is disordered. Positions G502–N530 are enriched in basic and acidic residues. A glycan (N-linked (GlcNAc...) asparagine) is linked at N530.

The protein belongs to the MIP/aquaporin (TC 1.A.8) family.

It localises to the membrane. The catalysed reaction is H2O(in) = H2O(out). Functionally, water channel required to facilitate the transport of water across membranes. May play a role in the vegetative growth. The protein is Aquaporin-5 of Botryotinia fuckeliana (strain B05.10) (Noble rot fungus).